Consider the following 424-residue polypeptide: CinA-like protein (424 aa).

Belongs to the CinA family.

This Shewanella sediminis (strain HAW-EB3) protein is CinA-like protein.